Consider the following 927-residue polypeptide: Echinoderm microtubule-associated protein-like 4 (927 aa).

The tract at residues 1 to 189 is microtubule-binding; it reads MDGFAGSLDD…IPSDVENYDD (189 aa). The stretch at 14–63 forms a coiled coil; sequence AASTSDVQDRLSALELRVQQQEDEITVLKAALADVLRRLAISEDQVATVR. The interval 85-132 is disordered; it reads NGGAGTRKPSHASSVAKKDTLSSAAKSVKRSSTLEKSHNSWDASEESR. A compositionally biased stretch (basic and acidic residues) spans 116–132; it reads STLEKSHNSWDASEESR. WD repeat units follow at residues 199-237, 241-288, 296-336, 343-378, 385-424, 442-480, 485-521, 524-563, 567-604, 610-646, 653-692, 702-760, and 767-806; these read LKLE…LFNY, TQRH…VWDS, VIGL…VWDW, AEIK…FWTW, RKQG…IWSK, QISK…MWDH, EREI…LRGT, DGFQ…LWNS, SLEW…VLDA, VSIH…LYNV, YSRY…YWDI, RSEC…LFQY, and APSH…QWRL. The segment covering 815 to 829 has biased composition (polar residues); the sequence is NDNIAESSSAVNSPV. Positions 815-927 are disordered; sequence NDNIAESSSA…NQDDDDAPLS (113 aa). The segment covering 914–927 has biased composition (acidic residues); the sequence is AQDENQDDDDAPLS.

Belongs to the WD repeat EMAP family. In terms of assembly, homotrimer; self-association is mediated by the N-terminal coiled coil.

The protein resides in the cytoplasm. The protein localises to the cytoskeleton. It is found in the spindle. Its subcellular location is the microtubule organizing center. It localises to the midbody. Essential for the formation and stability of microtubules (MTs). Required for the organization of the mitotic spindle and for the proper attachment of kinetochores to MTs. Promotes the recruitment of NUDC to the mitotic spindle for mitotic progression. The sequence is that of Echinoderm microtubule-associated protein-like 4 (eml4) from Xenopus laevis (African clawed frog).